Here is a 322-residue protein sequence, read N- to C-terminus: ATP-dependent 6-phosphofructokinase (322 aa).

An ATP-binding site is contributed by G11. Residue 21-25 participates in ADP binding; that stretch reads RAVVR. Residues 72 to 73 and 102 to 105 contribute to the ATP site; these read RC and GDGS. Residue D103 participates in Mg(2+) binding. 127–129 contacts substrate; that stretch reads TID. Catalysis depends on D129, which acts as the Proton acceptor. R156 is an ADP binding site. Substrate is bound by residues R164 and 171–173; that span reads MGR. ADP contacts are provided by residues 187–189, R213, and 215–217; these read GAE and KKH. Substrate-binding positions include E224, R245, and 251-254; that span reads HVQR.

It belongs to the phosphofructokinase type A (PFKA) family. ATP-dependent PFK group I subfamily. Prokaryotic clade 'B1' sub-subfamily. In terms of assembly, homotetramer. Requires Mg(2+) as cofactor.

It is found in the cytoplasm. The enzyme catalyses beta-D-fructose 6-phosphate + ATP = beta-D-fructose 1,6-bisphosphate + ADP + H(+). The protein operates within carbohydrate degradation; glycolysis; D-glyceraldehyde 3-phosphate and glycerone phosphate from D-glucose: step 3/4. With respect to regulation, allosterically activated by ADP and other diphosphonucleosides, and allosterically inhibited by phosphoenolpyruvate. Its function is as follows. Catalyzes the phosphorylation of D-fructose 6-phosphate to fructose 1,6-bisphosphate by ATP, the first committing step of glycolysis. The protein is ATP-dependent 6-phosphofructokinase of Staphylococcus aureus (strain MRSA252).